Reading from the N-terminus, the 431-residue chain is UDP-N-acetylmuramate--L-alanine ligase (431 aa).

108–114 (GAHGKST) provides a ligand contact to ATP.

The protein belongs to the MurCDEF family.

Its subcellular location is the cytoplasm. It carries out the reaction UDP-N-acetyl-alpha-D-muramate + L-alanine + ATP = UDP-N-acetyl-alpha-D-muramoyl-L-alanine + ADP + phosphate + H(+). The protein operates within cell wall biogenesis; peptidoglycan biosynthesis. Its function is as follows. Cell wall formation. This Campylobacter jejuni subsp. jejuni serotype O:23/36 (strain 81-176) protein is UDP-N-acetylmuramate--L-alanine ligase.